A 260-amino-acid chain; its full sequence is Putative methylesterase 19 (260 aa).

The active-site Acyl-ester intermediate is the S81. Active-site charge relay system residues include D210 and H238.

It belongs to the AB hydrolase superfamily. Methylesterase family.

Its function is as follows. Putative methylesterase. In Arabidopsis thaliana (Mouse-ear cress), this protein is Putative methylesterase 19.